A 98-amino-acid chain; its full sequence is Integration host factor subunit beta (98 aa).

This sequence belongs to the bacterial histone-like protein family. In terms of assembly, heterodimer of an alpha and a beta chain.

Functionally, this protein is one of the two subunits of integration host factor, a specific DNA-binding protein that functions in genetic recombination as well as in transcriptional and translational control. The polypeptide is Integration host factor subunit beta (Pseudomonas fluorescens (strain Pf0-1)).